The chain runs to 142 residues: Large ribosomal subunit protein uL13 (142 aa).

The protein belongs to the universal ribosomal protein uL13 family. In terms of assembly, part of the 50S ribosomal subunit.

Functionally, this protein is one of the early assembly proteins of the 50S ribosomal subunit, although it is not seen to bind rRNA by itself. It is important during the early stages of 50S assembly. This Bordetella bronchiseptica (strain ATCC BAA-588 / NCTC 13252 / RB50) (Alcaligenes bronchisepticus) protein is Large ribosomal subunit protein uL13.